Reading from the N-terminus, the 125-residue chain is uncharacterized protein (125 aa).

Its subcellular location is the plastid. This is an uncharacterized protein from Euglena longa (Euglenophycean alga).